Here is an 89-residue protein sequence, read N- to C-terminus: Small ribosomal subunit protein uS15 (89 aa).

This sequence belongs to the universal ribosomal protein uS15 family. As to quaternary structure, part of the 30S ribosomal subunit. Forms a bridge to the 50S subunit in the 70S ribosome, contacting the 23S rRNA.

In terms of biological role, one of the primary rRNA binding proteins, it binds directly to 16S rRNA where it helps nucleate assembly of the platform of the 30S subunit by binding and bridging several RNA helices of the 16S rRNA. Forms an intersubunit bridge (bridge B4) with the 23S rRNA of the 50S subunit in the ribosome. In Aliivibrio fischeri (strain ATCC 700601 / ES114) (Vibrio fischeri), this protein is Small ribosomal subunit protein uS15.